Here is a 291-residue protein sequence, read N- to C-terminus: ATP synthase gamma chain (291 aa).

This sequence belongs to the ATPase gamma chain family. In terms of assembly, F-type ATPases have 2 components, CF(1) - the catalytic core - and CF(0) - the membrane proton channel. CF(1) has five subunits: alpha(3), beta(3), gamma(1), delta(1), epsilon(1). CF(0) has three main subunits: a, b and c.

Its subcellular location is the cell membrane. Functionally, produces ATP from ADP in the presence of a proton gradient across the membrane. The gamma chain is believed to be important in regulating ATPase activity and the flow of protons through the CF(0) complex. This chain is ATP synthase gamma chain, found in Streptococcus equi subsp. equi (strain 4047).